Reading from the N-terminus, the 404-residue chain is MAESVERLQQRVQELERELAQERSLQVPRSGDGGGGRVRIEKMSSEVVDSNPYSRLMALKRMGIVSDYEKIRTFAVAIVGVGGVGSVTAEMLTRCGIGKLLLFDYDKVELANMNRLFFQPHQAGLSKVQAAEHTLRNINPDVLFEVHNYNITTVENFQHFMDRISNGGLEEGKPVDLVLSCVDNFEARMTINTACNELGQTWMESGVSENAVSGHIQLIIPGESACFACAPPLVVAANIDEKTLKREGVCAASLPTTMGVVAGILVQNVLKFLLNFGTVSFYLGYNAMQDFFPTMSMKPNPQCDDRNCRKQQEEYKKKVAALPKQEVIQEEEEIIHEDNEWGIELVSEVSEEELKNFSGPVPDLPEGITVAYTIPKKQEDSVTELTVEDSGESLEDLMAKMKNM.

A Phosphoserine modification is found at S45. 5 residues coordinate ATP: G83, D104, K127, N150, and N184. Zn(2+) contacts are provided by C226 and C229. C250 serves as the catalytic Glycyl thioester intermediate. Zn(2+) is bound by residues C303 and C308. A UFM1-interacting sequence (UIS) motif is present at residues 334 to 346 (IIHEDNEWGIELV). The tract at residues 347–377 (SEVSEEELKNFSGPVPDLPEGITVAYTIPKK) is linker. Phosphoserine occurs at positions 358 and 393. A UFC1-binding sequence (UFC) motif is present at residues 389–404 (DSGESLEDLMAKMKNM).

The protein belongs to the ubiquitin-activating E1 family. UBA5 subfamily. As to quaternary structure, homodimer; homodimerization is required for UFM1 activation. Interacts (via UIS motif) with UFM1; binds UFM1 via a trans-binding mechanism in which UFM1 interacts with distinct sites in both subunits of the UBA5 homodimer. Interacts (via C-terminus) with UFC1. Interacts (via UIS motif) with GABARAPL2 and, with lower affinity, with GABARAP and GABARAPL1. As to expression, widely expressed.

It localises to the cytoplasm. Its subcellular location is the nucleus. It is found in the endoplasmic reticulum membrane. The protein localises to the golgi apparatus. E1-like enzyme which specifically catalyzes the first step in ufmylation. Activates UFM1 by first adenylating its C-terminal glycine residue with ATP, and thereafter linking this residue to the side chain of a cysteine residue in E1, yielding a UFM1-E1 thioester and free AMP. Activates UFM1 via a trans-binding mechanism, in which UFM1 interacts with distinct sites in both subunits of the UBA5 homodimer. Trans-binding also promotes stabilization of the UBA5 homodimer, and enhances ATP-binding. Transfer of UFM1 from UBA5 to the E2-like enzyme UFC1 also takes place using a trans mechanism. Ufmylation plays a key role in various processes, such as ribosome recycling, response to DNA damage, interferon response or reticulophagy (also called ER-phagy). Ufmylation is essential for erythroid differentiation of both megakaryocytes and erythrocytes. This Homo sapiens (Human) protein is Ubiquitin-like modifier-activating enzyme 5.